The sequence spans 309 residues: Ribonuclease Z (309 aa).

Residues His61, His63, Asp65, His66, His144, Asp212, and His271 each contribute to the Zn(2+) site. The active-site Proton acceptor is Asp65.

It belongs to the RNase Z family. As to quaternary structure, homodimer. Requires Zn(2+) as cofactor.

It catalyses the reaction Endonucleolytic cleavage of RNA, removing extra 3' nucleotides from tRNA precursor, generating 3' termini of tRNAs. A 3'-hydroxy group is left at the tRNA terminus and a 5'-phosphoryl group is left at the trailer molecule.. Functionally, zinc phosphodiesterase, which displays some tRNA 3'-processing endonuclease activity. Probably involved in tRNA maturation, by removing a 3'-trailer from precursor tRNA. In Clostridium acetobutylicum (strain ATCC 824 / DSM 792 / JCM 1419 / IAM 19013 / LMG 5710 / NBRC 13948 / NRRL B-527 / VKM B-1787 / 2291 / W), this protein is Ribonuclease Z.